The sequence spans 428 residues: 3-phosphoshikimate 1-carboxyvinyltransferase (428 aa).

Residues lysine 20, serine 21, and arginine 25 each coordinate 3-phosphoshikimate. Phosphoenolpyruvate is bound at residue lysine 20. 2 residues coordinate phosphoenolpyruvate: glycine 92 and arginine 120. Serine 166, glutamine 168, aspartate 314, and lysine 341 together coordinate 3-phosphoshikimate. Phosphoenolpyruvate is bound at residue glutamine 168. Aspartate 314 (proton acceptor) is an active-site residue. Phosphoenolpyruvate contacts are provided by arginine 345 and arginine 387.

It belongs to the EPSP synthase family. In terms of assembly, monomer.

It localises to the cytoplasm. It catalyses the reaction 3-phosphoshikimate + phosphoenolpyruvate = 5-O-(1-carboxyvinyl)-3-phosphoshikimate + phosphate. Its pathway is metabolic intermediate biosynthesis; chorismate biosynthesis; chorismate from D-erythrose 4-phosphate and phosphoenolpyruvate: step 6/7. In terms of biological role, catalyzes the transfer of the enolpyruvyl moiety of phosphoenolpyruvate (PEP) to the 5-hydroxyl of shikimate-3-phosphate (S3P) to produce enolpyruvyl shikimate-3-phosphate and inorganic phosphate. This Listeria monocytogenes serotype 4a (strain HCC23) protein is 3-phosphoshikimate 1-carboxyvinyltransferase.